The following is a 974-amino-acid chain: Pentatricopeptide repeat-containing protein At5g61990, mitochondrial (974 aa).

The N-terminal 31 residues, 1–31, are a transit peptide targeting the mitochondrion; the sequence is MMGSMLFRKRTLVTRANFLLFRSFSVNVEKL. 24 PPR repeats span residues 96-130, 150-184, 185-219, 220-250, 257-275, 276-310, 311-345, 346-380, 381-415, 416-450, 451-485, 486-520, 521-555, 556-590, 591-625, 626-660, 661-695, 696-730, 731-761, 765-799, 804-838, 839-873, 874-908, and 914-948; these read KLDS…NWPV, DGVL…ELVP, RLSR…NVVF, DVKT…TEKE, NVDG…GLVP, LKYT…GVSL, DNHT…GINI, KPYM…GLIP, QAQA…NIVI, SPYT…GCRP, NVVI…GIAP, DIFC…GLKP, NAFT…GVLP, NKVL…GILG, DAKT…GIAP, DVFS…GLTP, NVII…GLHP, NAVT…GLVP, DSFV…NKKG, STAP…SFDR, NDVT…NLMP, TVIT…GIEP, DHIM…NAVD, and SIST…QYIP.

Belongs to the PPR family. P subfamily.

The protein resides in the mitochondrion. The chain is Pentatricopeptide repeat-containing protein At5g61990, mitochondrial from Arabidopsis thaliana (Mouse-ear cress).